The sequence spans 688 residues: Glycine--tRNA ligase beta subunit (688 aa).

Belongs to the class-II aminoacyl-tRNA synthetase family. Tetramer of two alpha and two beta subunits.

The protein localises to the cytoplasm. The enzyme catalyses tRNA(Gly) + glycine + ATP = glycyl-tRNA(Gly) + AMP + diphosphate. The sequence is that of Glycine--tRNA ligase beta subunit from Haemophilus influenzae (strain PittGG).